The primary structure comprises 1051 residues: Carbamoyl phosphate synthase large chain (1051 aa).

A carboxyphosphate synthetic domain region spans residues 1–399; the sequence is MKETPKKVLV…SLQKAVRMLD (399 aa). The ATP site is built by R127, R167, G173, G174, K206, L208, E213, G239, V240, H241, Q282, and E296. In terms of domain architecture, ATP-grasp 1 spans 131 to 325; that stretch reads RETMIENNLP…LAYVSAKLAL (195 aa). 3 residues coordinate Mg(2+): Q282, E296, and N298. Mn(2+) is bound by residues Q282, E296, and N298. Positions 400–548 are oligomerization domain; it reads IGEPGVVGGK…LTYNGTEDDL (149 aa). Residues 549–930 are carbamoyl phosphate synthetic domain; that stretch reads EFSQGNKLLM…LKSWLSSIPN (382 aa). The ATP-grasp 2 domain occupies 673–863; it reads SKLLDKLGIS…LINESMKAIF (191 aa). 10 residues coordinate ATP: R709, K748, I750, E755, G779, V780, H781, S782, Q822, and E834. Mg(2+) is bound by residues Q822, E834, and N836. Residues Q822, E834, and N836 each contribute to the Mn(2+) site. One can recognise an MGS-like domain in the interval 930-1051; that stretch reads NRIPNKNGIA…FEISEYGGGI (122 aa). An allosteric domain region spans residues 931–1051; sequence RIPNKNGIAL…FEISEYGGGI (121 aa).

Belongs to the CarB family. As to quaternary structure, composed of two chains; the small (or glutamine) chain promotes the hydrolysis of glutamine to ammonia, which is used by the large (or ammonia) chain to synthesize carbamoyl phosphate. Tetramer of heterodimers (alpha,beta)4. Requires Mg(2+) as cofactor. The cofactor is Mn(2+).

The enzyme catalyses hydrogencarbonate + L-glutamine + 2 ATP + H2O = carbamoyl phosphate + L-glutamate + 2 ADP + phosphate + 2 H(+). The catalysed reaction is hydrogencarbonate + NH4(+) + 2 ATP = carbamoyl phosphate + 2 ADP + phosphate + 2 H(+). It participates in amino-acid biosynthesis; L-arginine biosynthesis; carbamoyl phosphate from bicarbonate: step 1/1. Its pathway is pyrimidine metabolism; UMP biosynthesis via de novo pathway; (S)-dihydroorotate from bicarbonate: step 1/3. In terms of biological role, large subunit of the glutamine-dependent carbamoyl phosphate synthetase (CPSase). CPSase catalyzes the formation of carbamoyl phosphate from the ammonia moiety of glutamine, carbonate, and phosphate donated by ATP, constituting the first step of 2 biosynthetic pathways, one leading to arginine and/or urea and the other to pyrimidine nucleotides. The large subunit (synthetase) binds the substrates ammonia (free or transferred from glutamine from the small subunit), hydrogencarbonate and ATP and carries out an ATP-coupled ligase reaction, activating hydrogencarbonate by forming carboxy phosphate which reacts with ammonia to form carbamoyl phosphate. This Saccharolobus islandicus (strain M.16.4 / Kamchatka #3) (Sulfolobus islandicus) protein is Carbamoyl phosphate synthase large chain.